Reading from the N-terminus, the 212-residue chain is uncharacterized protein (212 aa).

The next 4 helical transmembrane spans lie at Phe20–Cys40, Leu70–Gly90, Phe155–Glu175, and Gln192–Ile212.

It belongs to the DedA family.

Its subcellular location is the cell membrane. This is an uncharacterized protein from Haemophilus influenzae (strain ATCC 51907 / DSM 11121 / KW20 / Rd).